The chain runs to 214 residues: Holliday junction branch migration complex subunit RuvA (214 aa).

Residues 1–63 (MISSLRGTVL…EDSLTLFGFP (63 aa)) are domain I. Residues 64–139 (GPDELRAFEL…KLFVTQPRAR (76 aa)) are domain II. Residues 139–143 (RSATS) are flexible linker. The interval 144 to 214 (AASTVTADVV…AAPTGQAADR (71 aa)) is domain III.

This sequence belongs to the RuvA family. In terms of assembly, homotetramer. Forms an RuvA(8)-RuvB(12)-Holliday junction (HJ) complex. HJ DNA is sandwiched between 2 RuvA tetramers; dsDNA enters through RuvA and exits via RuvB. An RuvB hexamer assembles on each DNA strand where it exits the tetramer. Each RuvB hexamer is contacted by two RuvA subunits (via domain III) on 2 adjacent RuvB subunits; this complex drives branch migration. In the full resolvosome a probable DNA-RuvA(4)-RuvB(12)-RuvC(2) complex forms which resolves the HJ.

The protein resides in the cytoplasm. In terms of biological role, the RuvA-RuvB-RuvC complex processes Holliday junction (HJ) DNA during genetic recombination and DNA repair, while the RuvA-RuvB complex plays an important role in the rescue of blocked DNA replication forks via replication fork reversal (RFR). RuvA specifically binds to HJ cruciform DNA, conferring on it an open structure. The RuvB hexamer acts as an ATP-dependent pump, pulling dsDNA into and through the RuvAB complex. HJ branch migration allows RuvC to scan DNA until it finds its consensus sequence, where it cleaves and resolves the cruciform DNA. The protein is Holliday junction branch migration complex subunit RuvA of Clavibacter michiganensis subsp. michiganensis (strain NCPPB 382).